Reading from the N-terminus, the 355-residue chain is Receptor-like serine/threonine-protein kinase At1g78530 (355 aa).

The Extracellular portion of the chain corresponds to Met1–Thr8. Residues Phe9 to Phe29 form a helical membrane-spanning segment. At Tyr30–Phe355 the chain is on the cytoplasmic side. In terms of domain architecture, Protein kinase spans Leu75–Ile347. ATP contacts are provided by residues Leu81–Val89 and Lys103. Tyr148 is subject to Phosphotyrosine. Asp197 functions as the Proton acceptor in the catalytic mechanism. Ser201 and Ser230 each carry phosphoserine. Residues Thr231 and Thr236 each carry the phosphothreonine modification. The residue at position 244 (Tyr244) is a Phosphotyrosine.

This sequence belongs to the protein kinase superfamily. Ser/Thr protein kinase family.

The protein resides in the cell membrane. It catalyses the reaction L-seryl-[protein] + ATP = O-phospho-L-seryl-[protein] + ADP + H(+). The enzyme catalyses L-threonyl-[protein] + ATP = O-phospho-L-threonyl-[protein] + ADP + H(+). This Arabidopsis thaliana (Mouse-ear cress) protein is Receptor-like serine/threonine-protein kinase At1g78530.